An 88-amino-acid polypeptide reads, in one-letter code: Small ribosomal subunit protein bS16 (88 aa).

Belongs to the bacterial ribosomal protein bS16 family.

The chain is Small ribosomal subunit protein bS16 from Geotalea uraniireducens (strain Rf4) (Geobacter uraniireducens).